The primary structure comprises 165 residues: Type II secretion system protein M (165 aa).

The Cytoplasmic segment spans residues 1-22 (MKELLAPVQAWWRSVTPREQKM). The helical transmembrane segment at 23–43 (VMGMGALTVLAIAYWGIWQPL) threads the bilayer. Residues 44 to 165 (SERTAQAQAR…VKRLQLKRGG (122 aa)) are Periplasmic-facing.

Belongs to the GSP M family. In terms of assembly, type II secretion system is composed of four main components: the outer membrane complex, the inner membrane complex, the cytoplasmic secretion ATPase and the periplasm-spanning pseudopilus. Forms homodimers. Interacts with EpsL/GspL. Interacts with EpsE/GspE. Interacts with EpsF/GspF.

It localises to the cell inner membrane. In terms of biological role, inner membrane component of the type II secretion system required for the energy-dependent secretion of extracellular factors such as proteases and toxins from the periplasm. Plays a role in the complex assembly and recruits EpsL resulting in a stable complex in the inner membrane. Provides thus a link between the energy-providing EpsE protein in the cytoplasm and the rest of the T2SS machinery. This is Type II secretion system protein M (epsM) from Vibrio cholerae serotype O1 (strain ATCC 39315 / El Tor Inaba N16961).